The chain runs to 427 residues: 3-phosphoshikimate 1-carboxyvinyltransferase (427 aa).

3-phosphoshikimate is bound by residues Lys22, Ser23, and Arg27. Phosphoenolpyruvate is bound at residue Lys22. The phosphoenolpyruvate site is built by Gly96 and Arg124. 3-phosphoshikimate is bound by residues Ser169, Ser170, Gln171, Ser197, Asp313, Asn336, and Lys340. Residue Gln171 coordinates phosphoenolpyruvate. Asp313 serves as the catalytic Proton acceptor. Phosphoenolpyruvate-binding residues include Arg344, Arg386, and Lys411.

Belongs to the EPSP synthase family. In terms of assembly, monomer.

Its subcellular location is the cytoplasm. It carries out the reaction 3-phosphoshikimate + phosphoenolpyruvate = 5-O-(1-carboxyvinyl)-3-phosphoshikimate + phosphate. It participates in metabolic intermediate biosynthesis; chorismate biosynthesis; chorismate from D-erythrose 4-phosphate and phosphoenolpyruvate: step 6/7. Catalyzes the transfer of the enolpyruvyl moiety of phosphoenolpyruvate (PEP) to the 5-hydroxyl of shikimate-3-phosphate (S3P) to produce enolpyruvyl shikimate-3-phosphate and inorganic phosphate. The polypeptide is 3-phosphoshikimate 1-carboxyvinyltransferase (Shigella dysenteriae).